Here is a 201-residue protein sequence, read N- to C-terminus: Thioredoxin reductase-like selenoprotein T (201 aa).

The N-terminal stretch at 1–26 is a signal peptide; sequence MARSSGPLCLLLLGGLVAGILSGASA. Positions 51–54 form a cross-link, cysteinyl-selenocysteine (Cys-Sec); that stretch reads CVSU. Residue Sec-54 is a non-standard amino acid, selenocysteine. A helical membrane pass occupies residues 96 to 116; sequence VFKLVLIGLIIAGKDPFAFFG.

Belongs to the SelWTH family. Selenoprotein T subfamily. Post-translationally, may contain a selenide-sulfide bond between Cys-51 and Sec-54. This bond is speculated to serve as redox-active pair.

Its subcellular location is the endoplasmic reticulum membrane. It catalyses the reaction [thioredoxin]-dithiol + NADP(+) = [thioredoxin]-disulfide + NADPH + H(+). Selenoprotein with thioredoxin reductase-like oxidoreductase activity. This is Thioredoxin reductase-like selenoprotein T (selenot) from Xenopus tropicalis (Western clawed frog).